The primary structure comprises 373 residues: Flagellar P-ring protein (373 aa).

Positions 1–28 are cleaved as a signal peptide; that stretch reads MPSVSAVILKLAAAALSALLLSGVAANA.

This sequence belongs to the FlgI family. As to quaternary structure, the basal body constitutes a major portion of the flagellar organelle and consists of four rings (L,P,S, and M) mounted on a central rod.

The protein localises to the periplasm. It localises to the bacterial flagellum basal body. Its function is as follows. Assembles around the rod to form the L-ring and probably protects the motor/basal body from shearing forces during rotation. This chain is Flagellar P-ring protein, found in Rhodopseudomonas palustris (strain HaA2).